Here is a 165-residue protein sequence, read N- to C-terminus: Nucleotide-binding protein Ccon26_01810 (165 aa).

Belongs to the YajQ family.

Nucleotide-binding protein. The polypeptide is Nucleotide-binding protein Ccon26_01810 (Campylobacter concisus (strain 13826)).